The chain runs to 665 residues: Potassium-transporting ATPase ATP-binding subunit (665 aa).

4 consecutive transmembrane segments (helical) span residues 28 to 48 (MFLT…PGFF), 56 to 76 (YLQF…FSSM), 207 to 227 (IALT…TASI), and 244 to 264 (IVLL…AIGI). Residue Asp295 is the 4-aspartylphosphate intermediate of the active site. ATP contacts are provided by residues Asp332, Glu336, 364 to 371 (FSSETKYS), and Lys382. Mg(2+) contacts are provided by Asp501 and Asp505. 3 consecutive transmembrane segments (helical) span residues 570–590 (YFVI…VNVL), 596–616 (IVAV…LIPL), and 644–664 (VVVP…LGVV).

It belongs to the cation transport ATPase (P-type) (TC 3.A.3) family. Type IA subfamily. The system is composed of three essential subunits: KdpA, KdpB and KdpC.

It is found in the cell membrane. The catalysed reaction is K(+)(out) + ATP + H2O = K(+)(in) + ADP + phosphate + H(+). Its function is as follows. Part of the high-affinity ATP-driven potassium transport (or Kdp) system, which catalyzes the hydrolysis of ATP coupled with the electrogenic transport of potassium into the cytoplasm. This subunit is responsible for energy coupling to the transport system and for the release of the potassium ions to the cytoplasm. This is Potassium-transporting ATPase ATP-binding subunit from Thermoplasma acidophilum (strain ATCC 25905 / DSM 1728 / JCM 9062 / NBRC 15155 / AMRC-C165).